The sequence spans 308 residues: Porphobilinogen deaminase (308 aa).

The residue at position 242 (Cys242) is an S-(dipyrrolylmethanemethyl)cysteine.

The protein belongs to the HMBS family. As to quaternary structure, monomer. It depends on dipyrromethane as a cofactor.

The enzyme catalyses 4 porphobilinogen + H2O = hydroxymethylbilane + 4 NH4(+). Its pathway is porphyrin-containing compound metabolism; protoporphyrin-IX biosynthesis; coproporphyrinogen-III from 5-aminolevulinate: step 2/4. In terms of biological role, tetrapolymerization of the monopyrrole PBG into the hydroxymethylbilane pre-uroporphyrinogen in several discrete steps. The protein is Porphobilinogen deaminase of Alkalilimnicola ehrlichii (strain ATCC BAA-1101 / DSM 17681 / MLHE-1).